The primary structure comprises 629 residues: tRNA uridine 5-carboxymethylaminomethyl modification enzyme MnmG (629 aa).

FAD contacts are provided by residues 13–18, valine 125, and serine 180; that span reads GGGHAG. 273–287 is an NAD(+) binding site; that stretch reads GPRYCPSIEDKVMRF. An FAD-binding site is contributed by glutamine 370.

Belongs to the MnmG family. Homodimer. Heterotetramer of two MnmE and two MnmG subunits. FAD serves as cofactor.

It localises to the cytoplasm. Functionally, NAD-binding protein involved in the addition of a carboxymethylaminomethyl (cmnm) group at the wobble position (U34) of certain tRNAs, forming tRNA-cmnm(5)s(2)U34. The polypeptide is tRNA uridine 5-carboxymethylaminomethyl modification enzyme MnmG (Cronobacter sakazakii (strain ATCC BAA-894) (Enterobacter sakazakii)).